A 452-amino-acid chain; its full sequence is 3-phosphoshikimate 1-carboxyvinyltransferase (452 aa).

3-phosphoshikimate is bound by residues Lys-24, Ser-25, and Arg-29. Residue Lys-24 participates in phosphoenolpyruvate binding. Residues Gly-95 and Arg-123 each contribute to the phosphoenolpyruvate site. 3-phosphoshikimate contacts are provided by Ser-167, Gln-169, Asp-319, and Lys-346. Residue Gln-169 coordinates phosphoenolpyruvate. Asp-319 acts as the Proton acceptor in catalysis. Phosphoenolpyruvate contacts are provided by Arg-350 and Arg-394.

It belongs to the EPSP synthase family. Monomer.

It is found in the cytoplasm. The enzyme catalyses 3-phosphoshikimate + phosphoenolpyruvate = 5-O-(1-carboxyvinyl)-3-phosphoshikimate + phosphate. It participates in metabolic intermediate biosynthesis; chorismate biosynthesis; chorismate from D-erythrose 4-phosphate and phosphoenolpyruvate: step 6/7. Functionally, catalyzes the transfer of the enolpyruvyl moiety of phosphoenolpyruvate (PEP) to the 5-hydroxyl of shikimate-3-phosphate (S3P) to produce enolpyruvyl shikimate-3-phosphate and inorganic phosphate. This chain is 3-phosphoshikimate 1-carboxyvinyltransferase, found in Phenylobacterium zucineum (strain HLK1).